Consider the following 269-residue polypeptide: Tryptophan synthase alpha chain (269 aa).

Residues E50 and D61 each act as proton acceptor in the active site.

Belongs to the TrpA family. As to quaternary structure, tetramer of two alpha and two beta chains.

It catalyses the reaction (1S,2R)-1-C-(indol-3-yl)glycerol 3-phosphate + L-serine = D-glyceraldehyde 3-phosphate + L-tryptophan + H2O. Its pathway is amino-acid biosynthesis; L-tryptophan biosynthesis; L-tryptophan from chorismate: step 5/5. Functionally, the alpha subunit is responsible for the aldol cleavage of indoleglycerol phosphate to indole and glyceraldehyde 3-phosphate. This Francisella tularensis subsp. holarctica (strain FTNF002-00 / FTA) protein is Tryptophan synthase alpha chain.